The chain runs to 20 residues: Equinatoxin-1'' (20 aa).

Residues 3–12 (AVAGAVIEGA) are plays an important role in the hemolytic activity. An N-terminal region region spans residues 11–20 (GATLTFNVLQ).

It belongs to the actinoporin family. Sea anemone subfamily. As to quaternary structure, octamer or nonamer in membranes. Monomer in the soluble state.

It localises to the secreted. It is found in the nematocyst. Its subcellular location is the target cell membrane. Functionally, pore-forming protein that forms cations-selective hydrophilic pores of around 1 nm and causes cardiac stimulation and cytolysis. Pore formation is a multi-step process that involves specific recognition of membrane sphingomyelin (but neither cholesterol nor phosphatidylcholine) using aromatic rich region and adjacent phosphocholine (POC) binding site, firm binding to the membrane (mainly driven by hydrophobic interactions) accompanied by the transfer of the N-terminal region to the lipid-water interface and finally pore formation after oligomerization of monomers. Cytolytic effects include red blood cells hemolysis, platelet aggregation and lysis, cytotoxic and cytostatic effects on fibroblasts. Lethality in mammals has been ascribed to severe vasospasm of coronary vessels, cardiac arrhythmia, and inotropic effects. The chain is Equinatoxin-1'' from Actinia equina (Beadlet anemone).